The following is a 404-amino-acid chain: Cytochrome P450 monooxygenase avaI (404 aa).

Cysteine 382 contacts heme.

It belongs to the cytochrome P450 family. Heme is required as a cofactor.

It participates in secondary metabolite biosynthesis. Its function is as follows. Cytochrome P450 monooxygenase; part of the cluster that mediates the biosynthesis of a highly modified cyclo-arginine-tryptophan dipeptide (cRW). The first step of the pathway is perfornmed by the arginine-containing cyclodipeptide synthase (RCPDS) avaA that acts as the scaffold-generating enzyme and is responsible for formation of the cyclo-Arg-Trp (cRW) diketopiperazine. AvaB then acts as a multifunctional flavoenzyme that is responsible for generating the cyclo-Arg-formylkynurenine DKP, which can be deformylated by avaC. AvaB then further catalyzes an additional N-oxidation followed by cyclization and dehydration. The next step is an N-acetylation of the guanidine group catalyzed by the arginine N-acetyltransferase avaD. The roles of the additional enzymes identified within the ava cluster still have to be determined. This is Cytochrome P450 monooxygenase avaI from Aspergillus versicolor.